We begin with the raw amino-acid sequence, 115 residues long: MNPLIQSLTEGQLRTDIPAFRPGDTVRVHAKVVEGTRERIQIFEGVVIARKGAGISETYTVRKISNGIGVERTFPIHTPRVDKIEVVRYGKVRRAKLYYLRALQGKAARIKEIRR.

Belongs to the bacterial ribosomal protein bL19 family.

This protein is located at the 30S-50S ribosomal subunit interface and may play a role in the structure and function of the aminoacyl-tRNA binding site. This Streptococcus sanguinis (strain SK36) protein is Large ribosomal subunit protein bL19.